A 263-amino-acid polypeptide reads, in one-letter code: Granzyme K (263 aa).

The N-terminal stretch at 1 to 21 (MRFSSWALVSLVAGVYMSSEC) is a signal peptide. Residues 22–25 (FHTE) constitute a propeptide, activation peptide. Residues 26–258 (IIGGREVQPH…YQTWIKSKLA (233 aa)) form the Peptidase S1 domain. Cys51 and Cys67 are oxidised to a cystine. Active-site charge relay system residues include His66 and Asp115. Intrachain disulfides connect Cys148/Cys219, Cys180/Cys198, and Cys209/Cys233. The Charge relay system role is filled by Ser213.

The protein belongs to the peptidase S1 family. Granzyme subfamily.

The protein localises to the cytoplasmic granule. This Mus musculus (Mouse) protein is Granzyme K (Gzmk).